The sequence spans 115 residues: uncharacterized protein (115 aa).

The disordered stretch occupies residues 1 to 86 (RRPARSGGDG…LSSQLVRPSR (86 aa)).

This is an uncharacterized protein from Homo sapiens (Human).